The following is a 194-amino-acid chain: Troponin I 4 (194 aa).

The segment at 1–27 (MSDVDADEARKMAERERKKEEVRKRLE) is disordered. Over residues 7–27 (DEARKMAERERKKEEVRKRLE) the composition is skewed to basic and acidic residues.

The protein belongs to the troponin I family. As to expression, expression is detected only in pharyngeal muscle cells from embryos to adults.

Functionally, troponin I is the inhibitory subunit of troponin, the thin filament regulatory complex which confers calcium-sensitivity to muscle actomyosin ATPase activity. The polypeptide is Troponin I 4 (tni-4) (Caenorhabditis elegans).